The chain runs to 1531 residues: Protein turtle (1531 aa).

Residues 1–858 (MGVCADLGSH…PARVKHKAIT (858 aa)) lie on the Extracellular side of the membrane. A disordered region spans residues 19–44 (QHNTEKSKEQQQQSQPLEIPEQRASK). 5 consecutive Ig-like C2-type domains span residues 132-243 (PEDA…KNGT), 253-340 (PRFS…ARVI), 344-436 (GAVI…AYLS), 440-529 (PAKV…GVMD), and 536-624 (PAFT…MAVT). 5 disulfide bridges follow: Cys150–Cys227, Cys275–Cys324, Cys366–Cys419, Cys462–Cys513, and Cys558–Cys611. 2 Fibronectin type-III domains span residues 632–728 (QPHA…TLED) and 760–851 (PPRN…VPAR). The chain crosses the membrane as a helical span at residues 859-879 (AGVVGGILFFIVAIILSVCAV). The Cytoplasmic portion of the chain corresponds to 880-1531 (KICNKRKRRK…QAMQQMESVC (652 aa)). 2 disordered regions span residues 1248–1269 (EETRRQQQQKQHPLEDHFVPLQ) and 1318–1395 (NLNL…SYPR). The span at 1333–1349 (SPESRSSSSGFGSKNTS) shows a compositional bias: low complexity. The segment covering 1380 to 1389 (QQAQGQTPHG) has biased composition (polar residues).

It belongs to the immunoglobulin superfamily. Turtle family. Interacts with bdl. Exclusively expressed in the central nervous system.

The protein localises to the membrane. In terms of biological role, essential protein that plays a role in the establishment of coordinated motor control. In the developing eye, involved in axonal targeting of the R7 photoreceptor. The chain is Protein turtle (tutl) from Drosophila melanogaster (Fruit fly).